We begin with the raw amino-acid sequence, 762 residues long: MAEDNSWKTSNFRQSVVNKINEAIQQTGMTSSKNGIEMENHVFHKARNKDEYLGFVARLILHVREMTAAAQQAQQDGGGNSSQQGGGGGGGGSGMPDPINALQNLASQGTRPQMMGQMGVGPGGPMGGQMGGAGQASNLLHSLRPQMQMGGMGGPMQGNRVGMGPGNQMGGMMGGPNQMQGPGAGMVGGMPGQMGVGMGPGGMSGGKIQMGVGPGGPNQMNPMVMGQIQAQLQNQNAMGGQQMGTVGGTMNAGNQMGQMVGANAGMNPQAMGMASNQVVRQQQLQQQGMGQVQMGLGPGQMGQLSAGVQGGVGHGGPAMQQQQQAGGMGPGAGPNQMNPGVAMGPGGVVGPAGGGGVMGPGPNQMLGAGGAGGPGAGQQGNFVGMGANAMVRKPPEMMPGGNVYPGSGGAVRSVTPNNFLRQSPSPSVPSPVGPGAHGPPSHPGQMIPSPALIPSPNPHMGGVAQRSTIGQSPGGSLNTPGQPGGAVPSPLNPQDEQLYREKYRALTKYIEPLKRMIAKMENDDIDKIAKMKRLLEILSNPSVRIPLETLHKCEAALTSQLGSIRETPTNNPLVEAVSSSLQAATGNHTLQRTFRPCLEALFGPDIKNLPPPAKQSRLALDDTGAAVGTGGGEIPHILQGEIARLDQKFKVSLDQCAISGTRTIKLICWLDDKNLPCVPPVAVTIPEDYPSTAPSCSLIEQEYNATPFLILVQKSLMARICKLPGLFTLSHLLDTWEMSVRQACSPNPTIVAPTGTSVLLGM.

3 disordered regions span residues 70-102 (AQQA…INAL), 311-330 (GVGH…GMGP), and 406-494 (GSGG…LNPQ). Over residues 76-94 (DGGGNSSQQGGGGGGGGSG) the composition is skewed to gly residues. Residues 465-481 (QRSTIGQSPGGSLNTPG) show a composition bias toward polar residues.

This sequence belongs to the Mediator complex subunit 15 family. As to quaternary structure, component of the Mediator complex.

It localises to the nucleus. Component of the Mediator complex, a coactivator involved in the regulated transcription of nearly all RNA polymerase II-dependent genes. Mediator functions as a bridge to convey information from gene-specific regulatory proteins to the basal RNA polymerase II transcription machinery. Mediator is recruited to promoters by direct interactions with regulatory proteins and serves as a scaffold for the assembly of a functional preinitiation complex with RNA polymerase II and the general transcription factors. The sequence is that of Mediator of RNA polymerase II transcription subunit 15 (MED15) from Anopheles gambiae (African malaria mosquito).